Consider the following 670-residue polypeptide: DEAD-box ATP-dependent RNA helicase 16 (670 aa).

The span at 1–10 (MAAAAAASSM) shows a compositional bias: low complexity. Residues 1-97 (MAAAAAASSM…EEREVSFDEL (97 aa)) form a disordered region. Composition is skewed to basic and acidic residues over residues 18 to 30 (AATE…HDEA) and 40 to 49 (NDGHTAHAAE). The short motif at 92-120 (VSFDELGLDEQLKRALRKKGLDKATPIQR) is the Q motif element. The region spanning 123-306 (IPLILEGKDV…KLLLHNPFIL (184 aa)) is the Helicase ATP-binding domain. Residue 136–143 (AKTGSGKT) participates in ATP binding. Residues 254–257 (DEAD) carry the DEAD box motif. The Helicase C-terminal domain occupies 340-523 (LVLLKLELIQ…PFPLLTKNAV (184 aa)). Residues 616-670 (DIDKPRRRKRMGFKGGSGRSSDPLKTFSAEGKSRRRGRKERDGEQDRRKRKKVES) are disordered. Positions 654-670 (KERDGEQDRRKRKKVES) are enriched in basic and acidic residues.

Belongs to the DEAD box helicase family. DDX56/DBP9 subfamily.

It catalyses the reaction ATP + H2O = ADP + phosphate + H(+). The chain is DEAD-box ATP-dependent RNA helicase 16 from Oryza sativa subsp. japonica (Rice).